Reading from the N-terminus, the 428-residue chain is GTPase Obg (428 aa).

Residues 1 to 158 (MFVDQVKVYV…RDVILELKVL (158 aa)) form the Obg domain. A disordered region spans residues 118 to 145 (KGGRGGRGNSRFATPANPAPQLSENGEP). The OBG-type G domain occupies 159-329 (ADVGLVGFPS…LLFEIANQLE (171 aa)). GTP contacts are provided by residues 165-172 (GFPSVGKS), 190-194 (FTTLV), 212-215 (DLPG), 282-285 (NKMD), and 310-312 (SAI). Positions 172 and 192 each coordinate Mg(2+). Positions 350–428 (RFDEGDAPFE…LLEFEFEFID (79 aa)) constitute an OCT domain.

The protein belongs to the TRAFAC class OBG-HflX-like GTPase superfamily. OBG GTPase family. Monomer. Mg(2+) is required as a cofactor.

The protein resides in the cytoplasm. An essential GTPase which binds GTP, GDP and possibly (p)ppGpp with moderate affinity, with high nucleotide exchange rates and a fairly low GTP hydrolysis rate. Plays a role in control of the cell cycle, stress response, ribosome biogenesis and in those bacteria that undergo differentiation, in morphogenesis control. This chain is GTPase Obg, found in Bacillus pumilus (strain SAFR-032).